A 305-amino-acid polypeptide reads, in one-letter code: Cell division control protein 2 homolog C (305 aa).

The Protein kinase domain occupies 4-297 (YEKLEKVGEG…AKAALDHPYF (294 aa)). ATP contacts are provided by residues 10-18 (VGEGTYGKV) and lysine 33. Threonine 14 is modified (phosphothreonine). Tyrosine 15 carries the phosphotyrosine modification. The active-site Proton acceptor is the aspartate 138. Residue threonine 172 is modified to Phosphothreonine; by CAK.

Belongs to the protein kinase superfamily. CMGC Ser/Thr protein kinase family. CDC2/CDKX subfamily.

It carries out the reaction L-seryl-[protein] + ATP = O-phospho-L-seryl-[protein] + ADP + H(+). The enzyme catalyses L-threonyl-[protein] + ATP = O-phospho-L-threonyl-[protein] + ADP + H(+). The catalysed reaction is [DNA-directed RNA polymerase] + ATP = phospho-[DNA-directed RNA polymerase] + ADP + H(+). Plays a key role in the control of the eukaryotic cell cycle. This chain is Cell division control protein 2 homolog C (CDC2C), found in Antirrhinum majus (Garden snapdragon).